We begin with the raw amino-acid sequence, 149 residues long: MRAVVQRVISSKVEVDGRVIGSIGKGLNVLLGISKEDTEEDIKYLKEKIINLRIFEDENEKLNKSLLDIGGDIIIVSQFTLYGDCRKGRRPSFIEALGGEEAYILYNKFVESIKKEVNNVATGEFGADMKVYIENDGPVTILLDSKKTF.

The Gly-cisPro motif, important for rejection of L-amino acids motif lies at 137-138; sequence GP.

It belongs to the DTD family. As to quaternary structure, homodimer.

The protein resides in the cytoplasm. It carries out the reaction glycyl-tRNA(Ala) + H2O = tRNA(Ala) + glycine + H(+). It catalyses the reaction a D-aminoacyl-tRNA + H2O = a tRNA + a D-alpha-amino acid + H(+). In terms of biological role, an aminoacyl-tRNA editing enzyme that deacylates mischarged D-aminoacyl-tRNAs. Also deacylates mischarged glycyl-tRNA(Ala), protecting cells against glycine mischarging by AlaRS. Acts via tRNA-based rather than protein-based catalysis; rejects L-amino acids rather than detecting D-amino acids in the active site. By recycling D-aminoacyl-tRNA to D-amino acids and free tRNA molecules, this enzyme counteracts the toxicity associated with the formation of D-aminoacyl-tRNA entities in vivo and helps enforce protein L-homochirality. This chain is D-aminoacyl-tRNA deacylase, found in Clostridium botulinum (strain ATCC 19397 / Type A).